A 145-amino-acid polypeptide reads, in one-letter code: 3-dehydroquinate dehydratase (145 aa).

Y23 serves as the catalytic Proton acceptor. Substrate contacts are provided by N74, H80, and D87. The Proton donor role is filled by H100. Residues 101–102 (IS) and R111 contribute to the substrate site.

The protein belongs to the type-II 3-dehydroquinase family. As to quaternary structure, homododecamer.

The catalysed reaction is 3-dehydroquinate = 3-dehydroshikimate + H2O. It participates in metabolic intermediate biosynthesis; chorismate biosynthesis; chorismate from D-erythrose 4-phosphate and phosphoenolpyruvate: step 3/7. Catalyzes a trans-dehydration via an enolate intermediate. The chain is 3-dehydroquinate dehydratase from Mycobacterium leprae (strain Br4923).